The primary structure comprises 438 residues: METPPIVIDNGSYEIKFGPSTNKKPFRALNALAKDKFGTSYLSNHIKNIKDISSITFRRPHELGQLTLWELESCIWDYCLFNPSEFDGFDLKEGKGHHLVASESCMTLPELSKHADQVIFEEYEFDSLFKSPVAVFVPFTKSYKGEMRTISGKDEDIDIVRGNSDSTNSTSSESKNAQDSGSDYHDFQLVIDSGFNCTWIIPVLKGIPYYKAVKKLDIGGRFLTGLLKETLSFRHYNMMDETILVNNIKEQCLFVSPVSYFDSFKTKDKHALEYVLPDFQTSFLGYVRNPRKENVPLPEDAQIITLTDELFTIPETFFHPEISQITKPGIVEAILESLSMLPEIVRPLMVGNIVCTGGNFNLPNFAQRLAAELQRQLPTDWTCHVSVPEGDCALFGWEVMSQFAKTDSYRKARVTREEYYEHGPDWCTKHRFGYQNWI.

Residues 158–181 are disordered; sequence DIVRGNSDSTNSTSSESKNAQDSG. The segment covering 163 to 174 has biased composition (low complexity); it reads NSDSTNSTSSES.

It belongs to the actin family. ARP6 subfamily. Component of the SWR1 chromatin remodeling complex composed of at least ACT1, ARP4, RVB1, RVB2, ARP6, YAF9, VPS71, VPS72, SWC3, SWC4, SWC5, SWC7 and SWR1, and perhaps BDF1.

The protein localises to the cytoplasm. It localises to the nucleus. Component of the SWR1 complex which mediates the ATP-dependent exchange of histone H2A for the H2A variant HZT1 leading to transcriptional regulation of selected genes by chromatin remodeling. Involved in chromosome stability. The sequence is that of Actin-like protein ARP6 (ARP6) from Saccharomyces cerevisiae (strain ATCC 204508 / S288c) (Baker's yeast).